The primary structure comprises 700 residues: Phenylalanine ammonia-lyase hkm12 (700 aa).

The active-site Proton donor/acceptor is Tyr82. A cross-link (5-imidazolinone (Ala-Gly)) is located at residues 183–185 (ASG). A 2,3-didehydroalanine (Ser) modification is found at Ser184. Residues Asn242, Gln325, Arg331, Asn361, Lys432, Glu460, and Asn463 each contribute to the (E)-cinnamate site.

It belongs to the PAL/histidase family. Contains an active site 4-methylidene-imidazol-5-one (MIO), which is formed autocatalytically by cyclization and dehydration of residues Ala-Ser-Gly.

It catalyses the reaction L-phenylalanine = (E)-cinnamate + NH4(+). It functions in the pathway secondary metabolite biosynthesis. Its function is as follows. Phenylalanine ammonia-lyase; part of the gene cluster that mediates the biosynthesis of hancockiamides, an unusual new family of N-cinnamoylated piperazines. The NRPS hkm10 and the NmrA-like reductase hkm9 are proposed to convert two molecules of L-Phe to the intermediary piperazine called xenocockiamide A. Xenocockiamide A is then converted to hancockiamide D via a series of hydroxylations and O-methylations. The tyrosinase hkm6 may catalyze an aromatic hydroxylation, then the 2-oxoglutarate-dependent Fe(II) dioxygenase hkm4 and the FAD-dependent phenol hydroxylase hkm7 may catalyze consecutive hydroxylations to install 2 more hydroxy groups, and the methyltransferase hkm8 probably catalyzes two methylations using 2 molecules of S-adenosyl-L-methionine (SAM). The NRPS hkm11 activates and transfers trans-cinnamate supplied by the PAL hkm12 to hancockiamide D and produces hancockiamide A. NRPS Hkm11 has the flexibility to tolerate the bulky hancockiamide G as a substrate and the absence of the acetyl-transferase hkm3 opens up the opportunity for hkm11 to introduce a second N-cinnamoyl moiety. The cytochrome P450 monooxygenase hkm5 catalyzes the methylenedioxy bridge formation, converting hancockiamide A into hancockiamide G. Hkm5 can also convert hancockiamide B into hancockiamide C, and hancockiamide D into hancockiamide H. The N-acetyltransferase hkm3 finally transfers an acetyl group to 1-N of piperazine, converting hancockiamide A into hancockiamide B and hancockiamide G into hancockiamide C. The chain is Phenylalanine ammonia-lyase hkm12 from Aspergillus hancockii.